The sequence spans 513 residues: ATP synthase subunit alpha (513 aa).

Residue 169-176 (GDRQIGKT) participates in ATP binding.

This sequence belongs to the ATPase alpha/beta chains family. In terms of assembly, F-type ATPases have 2 components, CF(1) - the catalytic core - and CF(0) - the membrane proton channel. CF(1) has five subunits: alpha(3), beta(3), gamma(1), delta(1), epsilon(1). CF(0) has three main subunits: a(1), b(2) and c(9-12). The alpha and beta chains form an alternating ring which encloses part of the gamma chain. CF(1) is attached to CF(0) by a central stalk formed by the gamma and epsilon chains, while a peripheral stalk is formed by the delta and b chains.

Its subcellular location is the cell inner membrane. It carries out the reaction ATP + H2O + 4 H(+)(in) = ADP + phosphate + 5 H(+)(out). Produces ATP from ADP in the presence of a proton gradient across the membrane. The alpha chain is a regulatory subunit. This is ATP synthase subunit alpha from Francisella tularensis subsp. tularensis (strain SCHU S4 / Schu 4).